We begin with the raw amino-acid sequence, 361 residues long: Glucose 1-dehydrogenase (361 aa).

Cys41 is a Zn(2+) binding site. Thr43 is a substrate binding site. Residues His68 and Glu69 each coordinate Zn(2+). Positions 119, 156, and 160 each coordinate substrate. Zn(2+) is bound at residue Glu156. NADP(+)-binding positions include 216–218 (NRH), 275–277 (FGT), 304–306 (SVD), and Lys349. Asp306 contributes to the substrate binding site.

This sequence belongs to the zinc-containing alcohol dehydrogenase family. Glucose 1-dehydrogenase subfamily. As to quaternary structure, homotetramer. Zn(2+) serves as cofactor.

The enzyme catalyses D-glucose + NAD(+) = D-glucono-1,5-lactone + NADH + H(+). It carries out the reaction D-glucose + NADP(+) = D-glucono-1,5-lactone + NADPH + H(+). The catalysed reaction is D-galactose + NAD(+) = D-galactono-1,4-lactone + NADH + H(+). It catalyses the reaction D-galactose + NADP(+) = D-galactono-1,5-lactone + NADPH + H(+). Catalyzes the NAD(P)(+)-dependent oxidation of D-glucose to D-gluconate via gluconolactone. Is also significantly active with galactose as substrate, but not with mannose or glucose 6-phosphate. Can utilize both NAD(+) and NADP(+) as electron acceptor, with a marked preference for NADP(+). Physiologically, may be involved in the degradation of both glucose and galactose through a non-phosphorylative variant of the Entner-Doudoroff pathway. This Thermoplasma acidophilum (strain ATCC 25905 / DSM 1728 / JCM 9062 / NBRC 15155 / AMRC-C165) protein is Glucose 1-dehydrogenase.